Reading from the N-terminus, the 694-residue chain is Polynucleotide 5'-hydroxyl-kinase NOL9 (694 aa).

An N-acetylalanine modification is found at Ala-2. The Nucleolar localization signal signature appears at 31-47 (RRPRRRLRNLRWRSRRR). Positions 80–101 (TSARRRASSPEPAEDPVPSGPA) are disordered. An ATP-binding site is contributed by 298–305 (GCQDIGKS). The tract at residues 472–694 (FADEEKEGPV…PKPKFYRKTY (223 aa)) is interaction with LAS1L. Lys-477 is covalently cross-linked (Glycyl lysine isopeptide (Lys-Gly) (interchain with G-Cter in SUMO2)).

It belongs to the Clp1 family. NOL9/GRC3 subfamily. As to quaternary structure, interacts with PELP1, WDR18 and SENP3. Interacts with LAS1L to form an ITS2 pre-rRNA endonuclease-kinase complex.

The protein localises to the nucleus. It localises to the nucleolus. It catalyses the reaction a 5'-end dephospho-2'-deoxyribonucleoside-DNA + ATP = a 5'-end 5'-phospho-2'-deoxyribonucleoside-DNA + ADP + H(+). The enzyme catalyses a 5'-end dephospho-ribonucleoside-RNA + ATP = a 5'-end 5'-phospho-ribonucleoside-RNA + ADP + H(+). Polynucleotide kinase that can phosphorylate the 5'-hydroxyl groups of single-stranded and double-stranded RNA and DNA substrates. Involved in rRNA processing and its kinase activity is required for the processing of the 32S precursor into 5.8S and 28S rRNAs, more specifically for the generation of the major 5.8S(S) form. Required for the efficient pre-rRNA processing of internal transcribed spacer 2 (ITS2). Associates with LAS1L to form an ITS2 pre-rRNA endonuclease-kinase complex and is responsible for the transport of this complex into the nucleolus. This Bos taurus (Bovine) protein is Polynucleotide 5'-hydroxyl-kinase NOL9 (NOL9).